Here is a 173-residue protein sequence, read N- to C-terminus: Ferritin heavy chain (173 aa).

A Ferritin-like diiron domain is found at 6–155 (QNFHEECERG…GYVTNLKRCG (150 aa)). Fe cation is bound by residues Glu23, Glu58, His61, Glu103, and Gln137.

Belongs to the ferritin family. In terms of assembly, oligomer of 24 subunits. There are two types of subunits: L (light) chain and H (heavy) chain. The functional molecule is roughly spherical and contains a central cavity into which the insoluble mineral iron core is deposited.

The protein localises to the cytoplasm. The catalysed reaction is 4 Fe(2+) + O2 + 4 H(+) = 4 Fe(3+) + 2 H2O. Its function is as follows. Stores iron in a soluble, non-toxic, readily available form. Important for iron homeostasis. Has ferroxidase activity. Iron is taken up in the ferrous form and deposited as ferric hydroxides after oxidation. This is Ferritin heavy chain from Echinococcus granulosus (Hydatid tapeworm).